The following is an 88-amino-acid chain: Putative membrane protein insertion efficiency factor (88 aa).

The disordered stretch occupies residues 68–88 (VPPPNSDTRARGEADARSHRL). Residues 75-88 (TRARGEADARSHRL) are compositionally biased toward basic and acidic residues.

This sequence belongs to the UPF0161 family.

It is found in the cell inner membrane. Could be involved in insertion of integral membrane proteins into the membrane. The sequence is that of Putative membrane protein insertion efficiency factor from Burkholderia ambifaria (strain MC40-6).